We begin with the raw amino-acid sequence, 305 residues long: Glycine--tRNA ligase alpha subunit (305 aa).

It belongs to the class-II aminoacyl-tRNA synthetase family. In terms of assembly, tetramer of two alpha and two beta subunits.

The protein resides in the cytoplasm. It carries out the reaction tRNA(Gly) + glycine + ATP = glycyl-tRNA(Gly) + AMP + diphosphate. The polypeptide is Glycine--tRNA ligase alpha subunit (Streptococcus suis (strain 98HAH33)).